Consider the following 363-residue polypeptide: MKIGVFVPIGNNGWLISTHAPQYMPTFELNKAIVQKAEHYHFDFALSMIKLRGFGGKTEFWDHNLESFTLMAGLAAVTSRIQIYATAATLTLPPAIVARMAATIDSISGGRFGVNLVTGWQKPEYEQMGIWPGDDYFSRRYDYLTEYVQVLRDLWGSGKSDFKGDFFTMDDCRVSPQPSVPMKVICAGQSDAGMAFSARYADFNFCFGKGVNTPTAFAPTAARMKQAAEQTGRDVGSYVLFMVIADETDDAARAKWEHYKAGADEEALSWLTEQSQKDTRSGTDTNVRQMADPTSAVNINMGTLVGSYASVARMLDEVASVPGAEGVLLTFDDFLSGIETFGERIQPLMQCRAHLPALTQEVA.

Residues 49 to 50 (IK), N115, E124, 140 to 141 (RY), and S190 contribute to the FMN site.

It belongs to the NtaA/SnaA/DszA monooxygenase family. RutA subfamily.

The enzyme catalyses uracil + FMNH2 + NADH + O2 = (Z)-3-ureidoacrylate + FMN + NAD(+) + H2O + H(+). The catalysed reaction is thymine + FMNH2 + NADH + O2 = (Z)-2-methylureidoacrylate + FMN + NAD(+) + H2O + H(+). Its function is as follows. Catalyzes the pyrimidine ring opening between N-3 and C-4 by an unusual flavin hydroperoxide-catalyzed mechanism, adding oxygen atoms in the process to yield ureidoacrylate peracid, that immediately reacts with FMN forming ureidoacrylate and FMN-N(5)-oxide. The FMN-N(5)-oxide reacts spontaneously with NADH to produce FMN. Requires the flavin reductase RutF to regenerate FMN in vivo. This is Pyrimidine monooxygenase RutA from Escherichia coli O6:K15:H31 (strain 536 / UPEC).